The sequence spans 29 residues: VSCEDCPDHCSTQKARAKCDNDKCVCEPK.

3 disulfides stabilise this stretch: Cys3–Cys19, Cys6–Cys24, and Cys10–Cys26.

The protein belongs to the short scorpion toxin superfamily. Potassium channel inhibitor family. Alpha-KTx 08 subfamily. As to expression, expressed by the venom gland.

The protein resides in the secreted. In terms of biological role, inhibits voltage-gated potassium channels. This Leiurus hebraeus (Hebrew deathstalker scorpion) protein is Potassium channel toxin alpha-KTx 8.4.